The sequence spans 393 residues: S-adenosylmethionine synthase 3 (393 aa).

Mg(2+) is bound at residue glutamate 9. Histidine 15 contributes to the ATP binding site. Residue glutamate 43 coordinates K(+). Residues glutamate 56 and glutamine 99 each contribute to the L-methionine site. Residues 167-169 (NGK), 235-238 (SGRF), aspartate 246, 252-253 (RK), alanine 269, lysine 273, and lysine 277 each bind ATP. Aspartate 246 lines the L-methionine pocket. Position 277 (lysine 277) interacts with L-methionine.

The protein belongs to the AdoMet synthase family. In terms of assembly, homotetramer. Requires Mn(2+) as cofactor. The cofactor is Mg(2+). Co(2+) serves as cofactor. It depends on K(+) as a cofactor. In terms of tissue distribution, mostly expressed in flowers, seedpods and roots, and, to a lower extent, in stems and leaves.

It is found in the cytoplasm. The catalysed reaction is L-methionine + ATP + H2O = S-adenosyl-L-methionine + phosphate + diphosphate. Its pathway is amino-acid biosynthesis; S-adenosyl-L-methionine biosynthesis; S-adenosyl-L-methionine from L-methionine: step 1/1. Catalyzes the formation of S-adenosylmethionine from methionine and ATP. The reaction comprises two steps that are both catalyzed by the same enzyme: formation of S-adenosylmethionine (AdoMet) and triphosphate, and subsequent hydrolysis of the triphosphate. This chain is S-adenosylmethionine synthase 3 (MSAMS3), found in Brassica juncea (Indian mustard).